The chain runs to 599 residues: Elongation factor 4 (599 aa).

In terms of domain architecture, tr-type G spans 2-184 (KNIRNFSIIA…RLVRDIPPPE (183 aa)). GTP-binding positions include 14 to 19 (DHGKST) and 131 to 134 (NKID).

This sequence belongs to the TRAFAC class translation factor GTPase superfamily. Classic translation factor GTPase family. LepA subfamily.

Its subcellular location is the cell inner membrane. The catalysed reaction is GTP + H2O = GDP + phosphate + H(+). In terms of biological role, required for accurate and efficient protein synthesis under certain stress conditions. May act as a fidelity factor of the translation reaction, by catalyzing a one-codon backward translocation of tRNAs on improperly translocated ribosomes. Back-translocation proceeds from a post-translocation (POST) complex to a pre-translocation (PRE) complex, thus giving elongation factor G a second chance to translocate the tRNAs correctly. Binds to ribosomes in a GTP-dependent manner. This is Elongation factor 4 from Escherichia coli O8 (strain IAI1).